Consider the following 290-residue polypeptide: Programmed cell death 1 ligand 1 (290 aa).

The first 18 residues, 1–18 (MRIFAGIIFTACCHLLRA), serve as a signal peptide directing secretion. Positions 19–127 (FTITAPKDLY…YGGADYKRIT (109 aa)) constitute an Ig-like V-type domain. The Extracellular portion of the chain corresponds to 19-239 (FTITAPKDLY…ATHPPQNRTH (221 aa)). N35 is a glycosylation site (N-linked (GlcNAc...) asparagine). Cystine bridges form between C40-C114 and C154-C208. Positions 133 to 224 (PYRKINQRIS…PGQNHTAELI (92 aa)) constitute an Ig-like C2-type domain. N-linked (GlcNAc...) asparagine glycosylation is found at N191, N199, N218, and N236. A helical membrane pass occupies residues 240-260 (WVLLGSILLFLIVVSTVLLFL). Over 261 to 290 (RKQVRMLDVEKCGVEDTSSKNRNDTQFEET) the chain is Cytoplasmic.

Belongs to the immunoglobulin superfamily. BTN/MOG family. As to quaternary structure, interacts with PDCD1. Interacts with CMTM4 and CMTM6. Interacts with CD80. In terms of processing, ubiquitinated; STUB1 likely mediates polyubiquitination of PD-L1/CD274 triggering its degradation. Ubiquitinated by MARCHF8; leading to degradation. Deubiquitinated by USP22; leading to stabilization. Highly expressed in the heart, thymus, skeletal muscle, and lung. Weakly expressed in the kidney, spleen, thyroid, and liver. Expressed on activated dendritic cells, B-cells and macrophages. Expressed in numerous tumor cells lines of lymphoid origin.

The protein localises to the cell membrane. Its subcellular location is the early endosome membrane. It is found in the recycling endosome membrane. Functionally, plays a critical role in induction and maintenance of immune tolerance to self. As a ligand for the inhibitory receptor PDCD1/PD-1, modulates the activation threshold of T-cells and limits T-cell effector response. Through a yet unknown activating receptor, may costimulate T-cell subsets that predominantly produce interleukin-10 (IL10). In terms of biological role, the PDCD1-mediated inhibitory pathway is exploited by tumors to attenuate anti-tumor immunity and escape destruction by the immune system, thereby facilitating tumor survival. The interaction with PDCD1/PD-1 inhibits cytotoxic T lymphocytes (CTLs) effector function. The blockage of the PDCD1-mediated pathway results in the reversal of the exhausted T-cell phenotype and the normalization of the anti-tumor response, providing a rationale for cancer immunotherapy. The sequence is that of Programmed cell death 1 ligand 1 (Cd274) from Mus musculus (Mouse).